An 85-amino-acid polypeptide reads, in one-letter code: U4-theraphotoxin-Hhn1a (85 aa).

The first 22 residues, 1-22 (MKVTLIVILTCAAVLVLHTTAA), serve as a signal peptide directing secretion. A propeptide spanning residues 23 to 48 (EELEAESQLMEVGMPDTELAAVDEER) is cleaved from the precursor. Disulfide bonds link cysteine 52/cysteine 66, cysteine 56/cysteine 77, and cysteine 71/cysteine 82.

Belongs to the neurotoxin 12 (Hwtx-2) family. 02 (Hwtx-2) subfamily. Monomer. In terms of tissue distribution, expressed by the venom gland.

It localises to the secreted. Its function is as follows. Neurotoxin active on both insects and mammals. The sequence is that of U4-theraphotoxin-Hhn1a from Cyriopagopus hainanus (Chinese bird spider).